The primary structure comprises 1580 residues: Transcriptional activator GLI3 (1580 aa).

Methionine 1 carries the post-translational modification N-acetylmethionine. 2 stretches are compositionally biased toward polar residues: residues 1–10 and 58–78; these read MEAQSHSSTT and ITMQ…PSTS. The interval 1–79 is disordered; it reads MEAQSHSSTT…KVSEEPSTSS (79 aa). Arginine 175 is modified (omega-N-methylarginine). The segment at 368-475 is disordered; sequence QSLGSAFGHS…DKDESKQEPE (108 aa). Positions 401-427 are enriched in polar residues; it reads NPVQVSSGPSESSQNKPTSESAVSSTG. Glycyl lysine isopeptide (Lys-Gly) (interchain with G-Cter in SUMO2) cross-links involve residues lysine 438 and lysine 462. Positions 461–474 are enriched in basic and acidic residues; the sequence is VKEEGDKDESKQEP. 5 C2H2-type zinc fingers span residues 480–505, 513–540, 546–570, 576–601, and 607–632; these read TNCH…NNDH, FVCR…MRRH, HKCT…LRSH, YVCE…NRTH, and YVCK…KTVH. Positions 620 to 728 are disordered; that stretch reads DPSSLRKHVK…PISNYSNSGL (109 aa). Basic and acidic residues predominate over residues 632-648; sequence HGPEAHVTKKQRGDIHP. Position 664 is a phosphoserine (serine 664). Residues 684 to 699 show a composition bias toward basic and acidic residues; that stretch reads SKREECLQVKTVKAEK. Over residues 703–726 the composition is skewed to low complexity; sequence SQPSPGGQSSCSSQQSPISNYSNS. Residues 745–845 are mediates interaction with DZIP1; that stretch reads DETPIMDSTI…VDVTMLNMLN (101 aa). Lysine 773 participates in a covalent cross-link: Glycyl lysine isopeptide (Lys-Gly) (interchain with G-Cter in ubiquitin). Residue lysine 779 forms a Glycyl lysine isopeptide (Lys-Gly) (interchain with G-Cter in SUMO2); alternate linkage. A Glycyl lysine isopeptide (Lys-Gly) (interchain with G-Cter in ubiquitin); alternate cross-link involves residue lysine 779. Glycyl lysine isopeptide (Lys-Gly) (interchain with G-Cter in ubiquitin) cross-links involve residues lysine 784 and lysine 800. 4 positions are modified to phosphoserine; by PKA: serine 849, serine 865, serine 877, and serine 907. Residues 863 to 882 show a composition bias toward low complexity; that stretch reads RSSGISPCFSSRRSSEASQA. The tract at residues 863–918 is disordered; sequence RSSGISPCFSSRRSSEASQAEGRPQNVSVADSYDPISTDASRRSSEASQSDGLPSL. Positions 908–918 are enriched in polar residues; the sequence is EASQSDGLPSL. Phosphoserine; by PKA occurs at positions 980 and 1006. The interval 981–1042 is disordered; that stretch reads DGGAHGYGRR…PAMATSAEKR (62 aa).

The protein belongs to the GLI C2H2-type zinc-finger protein family. As to quaternary structure, the full-length GLI3 form (GLI3FL) interacts with SUFU and this interaction regulates the formation of either repressor or activator forms of GLI3. Its association with SUFU is regulated by Hh signaling and dissociation of the SUFU-GLI3 interaction requires the presence of the ciliary motor KIF3A. Interacts with KIF7. The activator form of GLI3 (GLI3A) but not the repressor form (GLI3R) can interact with TRPS1. The phosphorylated form interacts with BTRC. Interacts with ZIC1. Interacts with ZIC3 (via C2H2-type domains 3, 4 and 5); the interaction enhances its transcriptional activity. Interacts with WRD11; the interaction associates EMX1 with GLI3. Interacts with DZIP1; retains GLI3 within the cytoplasm. In terms of processing, phosphorylated on multiple sites by protein kinase A (PKA) and phosphorylation by PKA primes further phosphorylation by CK1 and GSK3. Phosphorylated by DYRK2 (in vitro). Phosphorylation is essential for its proteolytic processing. Post-translationally, transcriptional repressor GLI3R, a C-terminally truncated form, is generated from the full-length GLI3 protein (GLI3FL/GLI3-190) through proteolytic processing. This process requires PKA-primed phosphorylation of GLI3, ubiquitination of GLI3 and the presence of BTRC. GLI3FL is complexed with SUFU in the cytoplasm and is maintained in a neutral state. Without the Hh signal, the SUFU-GLI3 complex is recruited to cilia, leading to the efficient processing of GLI3FL into GLI3R. GLI3R formation leads to its dissociation from SUFU, allowing it to translocate into the nucleus, and repress Hh target genes. When Hh signaling is initiated, SUFU dissociates from GLI3FL and this has two consequences. First, GLI3R production is halted. Second, free GLI3FL translocates to the nucleus, where it is phosphorylated, destabilized, and converted to a transcriptional activator (GLI3A). Phosphorylated in vitro by ULK3. In terms of tissue distribution, is expressed in a wide variety of normal adult tissues, including lung, colon, spleen, placenta, testis, and myometrium.

It localises to the nucleus. It is found in the cytoplasm. The protein localises to the cell projection. The protein resides in the cilium. Has a dual function as a transcriptional activator and a repressor of the sonic hedgehog (Shh) pathway, and plays a role in limb development. The full-length GLI3 form (GLI3FL) after phosphorylation and nuclear translocation, acts as an activator (GLI3A) while GLI3R, its C-terminally truncated form, acts as a repressor. A proper balance between the GLI3 activator and the repressor GLI3R, rather than the repressor gradient itself or the activator/repressor ratio gradient, specifies limb digit number and identity. In concert with TRPS1, plays a role in regulating the size of the zone of distal chondrocytes, in restricting the zone of PTHLH expression in distal cells and in activating chondrocyte proliferation. Binds to the minimal GLI-consensus sequence 5'-GGGTGGTC-3'. The polypeptide is Transcriptional activator GLI3 (GLI3) (Homo sapiens (Human)).